The following is a 117-amino-acid chain: Prefoldin subunit beta (117 aa).

This sequence belongs to the prefoldin subunit beta family. Heterohexamer of two alpha and four beta subunits.

The protein localises to the cytoplasm. Its function is as follows. Molecular chaperone capable of stabilizing a range of proteins. Seems to fulfill an ATP-independent, HSP70-like function in archaeal de novo protein folding. The polypeptide is Prefoldin subunit beta (pfdB) (Methanosarcina acetivorans (strain ATCC 35395 / DSM 2834 / JCM 12185 / C2A)).